The chain runs to 161 residues: Small ribosomal subunit protein uS19 (161 aa).

Positions 1-19 (MARQKKYSGKGGARKKNKQ) are enriched in basic residues. Residues 1–26 (MARQKKYSGKGGARKKNKQKQNVAPR) are disordered.

This sequence belongs to the universal ribosomal protein uS19 family.

Protein S19 forms a complex with S13 that binds strongly to the 16S ribosomal RNA. The protein is Small ribosomal subunit protein uS19 of Methanococcus maripaludis (strain DSM 14266 / JCM 13030 / NBRC 101832 / S2 / LL).